A 515-amino-acid chain; its full sequence is MTDKLIIFDTTLRDGEQSPGASMTKEEKIRIAKQLERMKVDVIEAGFAASSNGDFDAIQTIASQVKDSTICSLARANDKDIQRAADALKPANSFRIHTFIATSPLHMEKKLRMTPDQVFEQARLAVRFARKFTDNIEFSPEDGSRSDMDFLCRVLEAVIAEGATTINIADTVGYGVPELYGNLVKTLRERIPNSDKAIFSVHCHNDLGMAVANSLAGVKIGGARQVECTINGLGERAGNTSLEEIVMAVKTRKDYFGLDLGIDTTQIVPASKLVSQITGFVVQPNKAVVGANAFAHASGIHQDGVLKARDTYEIMRAEDVGWTANKIVLGKLSGRNAFKQRLQELGVSLDSEAELNAAFARFKDLADRKAEIFDEDIIAIVTEEESALAQEHEHYKFVSLAQRSETGERPQAKVVFAVDGDEVAGEASGNGPVDATFNAIETEVGSGAELLLYSVNAITTGTQAQGEVTVRLSKSGRIVNGVGTDPDIVAASAKAYIAALNKLYSNADKLNPQRA.

The Pyruvate carboxyltransferase domain occupies 5-268 (LIIFDTTLRD…DLGIDTTQIV (264 aa)). Residues Asp-14, His-202, His-204, and Asn-239 each contribute to the Mn(2+) site. Residues 396-515 (KFVSLAQRSE…NADKLNPQRA (120 aa)) are regulatory domain.

This sequence belongs to the alpha-IPM synthase/homocitrate synthase family. LeuA type 1 subfamily. As to quaternary structure, homodimer. Requires Mn(2+) as cofactor.

It localises to the cytoplasm. The enzyme catalyses 3-methyl-2-oxobutanoate + acetyl-CoA + H2O = (2S)-2-isopropylmalate + CoA + H(+). It functions in the pathway amino-acid biosynthesis; L-leucine biosynthesis; L-leucine from 3-methyl-2-oxobutanoate: step 1/4. Catalyzes the condensation of the acetyl group of acetyl-CoA with 3-methyl-2-oxobutanoate (2-ketoisovalerate) to form 3-carboxy-3-hydroxy-4-methylpentanoate (2-isopropylmalate). This chain is 2-isopropylmalate synthase, found in Burkholderia pseudomallei (strain 1106a).